A 521-amino-acid polypeptide reads, in one-letter code: Protein DETOXIFICATION 44, chloroplastic (521 aa).

The transit peptide at 1-31 (MAAVATSFCFSPHRSPSRFGNPNSSIRRTIV) directs the protein to the chloroplast. Residues 12 to 73 (PHRSPSRFGN…DHDHKPDPGI (62 aa)) are disordered. Polar residues-rich tracts occupy residues 18 to 27 (RFGNPNSSIR) and 42 to 61 (AVST…TSQN). Transmembrane regions (helical) follow at residues 80-100 (IMSI…TSLV), 103-123 (AFVG…VSVF), 167-187 (VSTS…ALSL), 213-235 (RLRA…FRGF), 242-262 (LYAV…LIFV), 268-288 (SGAA…LLWK), 314-334 (LLIG…SLAA), 345-365 (QIVL…AIAA), 385-405 (LFGV…VLFI), 423-443 (IALS…LAFV), 454-474 (FGFA…FMLV), and 481-503 (LAGI…AWRL).

This sequence belongs to the multi antimicrobial extrusion (MATE) (TC 2.A.66.1) family. In terms of tissue distribution, expressed in shoots.

It is found in the plastid. The protein resides in the chloroplast membrane. The chain is Protein DETOXIFICATION 44, chloroplastic from Arabidopsis thaliana (Mouse-ear cress).